A 403-amino-acid chain; its full sequence is Subtilisin-like protease CPC735_035780 (403 aa).

A signal peptide spans 1 to 19 (MSIMKIATLFFAALSAVEA). A propeptide spanning residues 20–117 (AKLLTPSDKR…VEPDRRVHLT (98 aa)) is cleaved from the precursor. One can recognise an Inhibitor I9 domain in the interval 35–116 (SYIVVMKDNV…YVEPDRRVHL (82 aa)). Residues 127 to 403 (SWGLGRISHR…NKLLYNNSGR (277 aa)) enclose the Peptidase S8 domain. Residues Asp159 and His190 each act as charge relay system in the active site. N-linked (GlcNAc...) asparagine glycosylation is found at Asn233 and Asn251. Ser349 functions as the Charge relay system in the catalytic mechanism. An N-linked (GlcNAc...) asparagine glycan is attached at Asn399.

Belongs to the peptidase S8 family.

It is found in the secreted. Secreted subtilisin-like serine protease with keratinolytic activity that contributes to pathogenicity. This Coccidioides posadasii (strain C735) (Valley fever fungus) protein is Subtilisin-like protease CPC735_035780.